We begin with the raw amino-acid sequence, 1348 residues long: Kinesin-like protein KIF7 (1348 aa).

Residues Pro-15–Ile-349 form the Kinesin motor domain. ATP is bound at residue Gly-94–Thr-101. The tract at residues His-358–Gly-479 is interaction with DLG5. The segment at His-358–Glu-1211 is interaction with SMO. 2 disordered regions span residues Arg-451–Thr-486 and Ala-607–Glu-674. Residues Arg-480–Gln-542 are a coiled coil. Acidic residues predominate over residues Ser-620 to Glu-636. Coiled coils occupy residues Ala-698 to Leu-1057 and Phe-1109 to Glu-1211. At Ser-903 the chain carries Phosphoserine. 2 disordered regions span residues Leu-1288–Met-1314 and Lys-1328–Leu-1348.

This sequence belongs to the TRAFAC class myosin-kinesin ATPase superfamily. Kinesin family. Can form homodimers and interacts with microtubules. Interacts with GLI1 and SMO. Interacts with GLI2, GLI3 and SUFU. Interacts with NPHP1. Interacts with SMO and DLG5 (via PDZ4 or guanylate kinase-like domain). In terms of processing, polyubiquitinated by UBR3. In terms of tissue distribution, expressed in heart, lung, liver, kidney, testis, spleen and cerebellum.

The protein resides in the cell projection. Its subcellular location is the cilium. It is found in the cytoplasm. It localises to the cytoskeleton. The protein localises to the cilium basal body. In terms of biological role, essential for hedgehog signaling regulation: acts both as a negative and a positive regulator of sonic hedgehog (Shh) and Indian hedgehog (Ihh) pathways, acting downstream of SMO, through both SUFU-dependent and -independent mechanisms. Involved in the regulation of microtubular dynamics. Required for proper organization of the ciliary tip and control of ciliary localization of SUFU-GLI2 complexes. Required for localization of GLI3 to cilia in response to Shh. Negatively regulates Shh signaling by preventing inappropriate activation of the transcriptional activator GLI2 in the absence of ligand. Positively regulates Shh signaling by preventing the processing of the transcription factor GLI3 into its repressor form. In keratinocytes, promotes the dissociation of SUFU-GLI2 complexes, GLI2 nuclear translocation and Shh signaling activation. Involved in the regulation of epidermal differentiation and chondrocyte development. In Mus musculus (Mouse), this protein is Kinesin-like protein KIF7 (Kif7).